The chain runs to 640 residues: Serine/threonine-protein phosphatase with EF-hands 1 (640 aa).

Positions 16–45 (VVRAALIIQNWYRRYRARLSARQHYALAIF) constitute an IQ domain. The interval 122–445 (INLLLQAFKQ…PQFFQYQVTS (324 aa)) is catalytic. Mn(2+) contacts are provided by aspartate 173, histidine 175, aspartate 202, and asparagine 234. Residue histidine 235 is the Proton donor of the active site. Positions 286 and 393 each coordinate Mn(2+). EF-hand domains are found at residues 473–508 (ARKT…ILGL), 556–591 (RYRS…FNAH), and 596–631 (IDDS…VHKY). Ca(2+)-binding residues include aspartate 569, aspartate 571, serine 573, glutamate 580, aspartate 609, asparagine 611, aspartate 613, asparagine 615, and glutamate 620.

This sequence belongs to the PPP phosphatase family. The cofactor is Mn(2+). Requires Mg(2+) as cofactor.

It carries out the reaction O-phospho-L-seryl-[protein] + H2O = L-seryl-[protein] + phosphate. It catalyses the reaction O-phospho-L-threonyl-[protein] + H2O = L-threonyl-[protein] + phosphate. With respect to regulation, activated by calcium. In terms of biological role, may have a role in the recovery or adaptation response of photoreceptors. May have a role in development. This Rattus norvegicus (Rat) protein is Serine/threonine-protein phosphatase with EF-hands 1 (Ppef1).